Consider the following 410-residue polypeptide: Arginine deiminase (410 aa).

The Amidino-cysteine intermediate role is filled by cysteine 400.

The protein belongs to the arginine deiminase family.

The protein localises to the cytoplasm. The enzyme catalyses L-arginine + H2O = L-citrulline + NH4(+). It participates in amino-acid degradation; L-arginine degradation via ADI pathway; carbamoyl phosphate from L-arginine: step 1/2. The sequence is that of Arginine deiminase from Lactococcus lactis subsp. cremoris (strain MG1363).